A 524-amino-acid chain; its full sequence is GMP synthase [glutamine-hydrolyzing] (524 aa).

Residues 5–195 (KVIVIDFGGQ…VRGVCGCAGT (191 aa)) form the Glutamine amidotransferase type-1 domain. The Nucleophile role is filled by cysteine 82. Active-site residues include histidine 169 and glutamate 171. The GMPS ATP-PPase domain maps to 196-389 (WKMDAFVENT…LGIPEHLVFR (194 aa)). Residue 223–229 (SGGVDSS) participates in ATP binding.

In terms of assembly, homodimer.

The catalysed reaction is XMP + L-glutamine + ATP + H2O = GMP + L-glutamate + AMP + diphosphate + 2 H(+). It functions in the pathway purine metabolism; GMP biosynthesis; GMP from XMP (L-Gln route): step 1/1. Functionally, catalyzes the synthesis of GMP from XMP. This Lachnospira eligens (strain ATCC 27750 / DSM 3376 / VPI C15-48 / C15-B4) (Eubacterium eligens) protein is GMP synthase [glutamine-hydrolyzing].